The chain runs to 408 residues: LL-diaminopimelate aminotransferase (408 aa).

Y15 and G42 together coordinate substrate. Pyridoxal 5'-phosphate is bound by residues Y72, S108–K109, Y132, N187, Y218, and S246–S248. Residues K109, Y132, and N187 each coordinate substrate. An N6-(pyridoxal phosphate)lysine modification is found at K249. Pyridoxal 5'-phosphate is bound by residues R257 and N292. Substrate-binding residues include N292 and R388.

The protein belongs to the class-I pyridoxal-phosphate-dependent aminotransferase family. LL-diaminopimelate aminotransferase subfamily. As to quaternary structure, homodimer. Requires pyridoxal 5'-phosphate as cofactor.

The enzyme catalyses (2S,6S)-2,6-diaminopimelate + 2-oxoglutarate = (S)-2,3,4,5-tetrahydrodipicolinate + L-glutamate + H2O + H(+). Its pathway is amino-acid biosynthesis; L-lysine biosynthesis via DAP pathway; LL-2,6-diaminopimelate from (S)-tetrahydrodipicolinate (aminotransferase route): step 1/1. In terms of biological role, involved in the synthesis of meso-diaminopimelate (m-DAP or DL-DAP), required for both lysine and peptidoglycan biosynthesis. Catalyzes the direct conversion of tetrahydrodipicolinate to LL-diaminopimelate. The chain is LL-diaminopimelate aminotransferase from Prochlorococcus marinus (strain MIT 9312).